We begin with the raw amino-acid sequence, 1415 residues long: DNA-directed RNA polymerase subunit beta' (1415 aa).

Zn(2+) is bound by residues C72, C74, C87, and C90. 3 residues coordinate Mg(2+): D463, D465, and D467. Residues C812, C886, C893, and C896 each coordinate Zn(2+).

It belongs to the RNA polymerase beta' chain family. The RNAP catalytic core consists of 2 alpha, 1 beta, 1 beta' and 1 omega subunit. When a sigma factor is associated with the core the holoenzyme is formed, which can initiate transcription. Requires Mg(2+) as cofactor. The cofactor is Zn(2+).

The catalysed reaction is RNA(n) + a ribonucleoside 5'-triphosphate = RNA(n+1) + diphosphate. Its function is as follows. DNA-dependent RNA polymerase catalyzes the transcription of DNA into RNA using the four ribonucleoside triphosphates as substrates. This chain is DNA-directed RNA polymerase subunit beta', found in Dinoroseobacter shibae (strain DSM 16493 / NCIMB 14021 / DFL 12).